A 765-amino-acid chain; its full sequence is SNF-related serine/threonine-protein kinase (765 aa).

In terms of domain architecture, Protein kinase spans 16-269 (YDLDKTLGRG…LEEIENHPWL (254 aa)). Residues 22 to 30 (LGRGHFAVV) and Lys-45 each bind ATP. The Proton acceptor role is filled by Asp-139. Ser-162 is modified (phosphoserine). Thr-173 is subject to Phosphothreonine; by LKB1. The region spanning 291–334 (SEEEHNSIIQRMVLGDIADRDAIVEALETNRYNHITATYFLLAE) is the UBA domain. Phosphoserine is present on residues Ser-362, Ser-390, Ser-482, Ser-495, and Ser-518. Residues 512-634 (LKMNIASPGT…RCAGPSNSMQ (123 aa)) form a disordered region. A compositionally biased stretch (basic residues) spans 522 to 532 (VHKRYHRRKSQ). Residues 533–542 (GRGSSCSSSE) show a composition bias toward low complexity. Arg-534 is modified (omega-N-methylarginine). A compositionally biased stretch (basic and acidic residues) spans 549-558 (ESRRRLDKDS). A compositionally biased stretch (gly residues) spans 603–614 (AGGGSPSSGSGG). Ser-607 carries the post-translational modification Phosphoserine.

Belongs to the protein kinase superfamily. CAMK Ser/Thr protein kinase family. The cofactor is Mg(2+). Autophosphorylated. Phosphorylation on Thr-173 by STK11/LKB1 in complex with STE20-related adapter-alpha (STRADA) pseudo kinase and CAB39. In terms of tissue distribution, expressed in hematopoietic progenitor cells and leukemic cell lines. Weakly expressed in the testis.

The protein resides in the nucleus. The enzyme catalyses L-seryl-[protein] + ATP = O-phospho-L-seryl-[protein] + ADP + H(+). It carries out the reaction L-threonyl-[protein] + ATP = O-phospho-L-threonyl-[protein] + ADP + H(+). Its activity is regulated as follows. Activated by phosphorylation on Thr-173. Functionally, may play a role in hematopoietic cell proliferation or differentiation. Potential mediator of neuronal apoptosis. This is SNF-related serine/threonine-protein kinase from Homo sapiens (Human).